The following is a 72-amino-acid chain: Phaiodotoxin-3 (72 aa).

The 72-residue stretch at 1–72 folds into the LCN-type CS-alpha/beta domain; the sequence is KFIRHKDESF…CFGALESKCA (72 aa). 4 disulfide bridges follow: Cys-13-Cys-38, Cys-23-Cys-50, Cys-27-Cys-52, and Cys-63-Cys-71.

The protein belongs to the long (4 C-C) scorpion toxin superfamily. Sodium channel inhibitor family. Expressed by the venom gland.

The protein resides in the secreted. Functionally, sodium channel (Nav) specific neurotoxin. This is Phaiodotoxin-3 from Anuroctonus phaiodactylus (Mafia scorpion).